We begin with the raw amino-acid sequence, 160 residues long: MLQIKIVAVGKIRERFLMEGIKEYAKRLSAYIRLEMTEIADEPCPERLSAADEERVKDREGERLLKGIGPQEHVILLDLQGKEFTSPDFSEYMDELALMGKSSVTFIIGGSLGVSGEVRKRADYRWSFSRLTFPHPLMRLMLLEQIYRAMRISKGEPYHK.

Residues L77, G109, and 128-133 (FSRLTF) contribute to the S-adenosyl-L-methionine site.

The protein belongs to the RNA methyltransferase RlmH family. In terms of assembly, homodimer.

Its subcellular location is the cytoplasm. The enzyme catalyses pseudouridine(1915) in 23S rRNA + S-adenosyl-L-methionine = N(3)-methylpseudouridine(1915) in 23S rRNA + S-adenosyl-L-homocysteine + H(+). Its function is as follows. Specifically methylates the pseudouridine at position 1915 (m3Psi1915) in 23S rRNA. This Desulfitobacterium hafniense (strain DSM 10664 / DCB-2) protein is Ribosomal RNA large subunit methyltransferase H.